Here is a 250-residue protein sequence, read N- to C-terminus: ATP synthase subunit a (250 aa).

The next 6 helical transmembrane spans lie at 29 to 49 (ASLF…FATS), 84 to 104 (FFPL…LGMV), 114 to 134 (IIVT…YGFI), 143 to 163 (LFVP…IEII), 185 to 205 (ITLK…ALGI), and 208 to 228 (AILP…VAFL).

The protein belongs to the ATPase A chain family. As to quaternary structure, F-type ATPases have 2 components, CF(1) - the catalytic core - and CF(0) - the membrane proton channel. CF(1) has five subunits: alpha(3), beta(3), gamma(1), delta(1), epsilon(1). CF(0) has three main subunits: a(1), b(2) and c(9-12). The alpha and beta chains form an alternating ring which encloses part of the gamma chain. CF(1) is attached to CF(0) by a central stalk formed by the gamma and epsilon chains, while a peripheral stalk is formed by the delta and b chains.

Its subcellular location is the cell inner membrane. Key component of the proton channel; it plays a direct role in the translocation of protons across the membrane. The chain is ATP synthase subunit a from Rhizobium rhizogenes (strain K84 / ATCC BAA-868) (Agrobacterium radiobacter).